The sequence spans 428 residues: MKSMRILPISLTIMAGLLSIEASAVEFHGYARSGIGWTGSGGEQQCFQSTGAQSKYRLGNECETYAELKLGQELWKDGNKSFYFDTNVAYSVAQKNDWESTDPAFREVNVQAKNVIDWLPGSTLWAGKRFYQRHDVHMIDFYYWDISGPGAGLQDIDLGFSKLALAVTRNTESGGSYGWIASQRKEIPTSNDVYDIRLSGLEVNPGGNLELGFDYGRANARDHYKLDRHASKDGFMFTAEHTQSMLGGFNKFVVQYATDSMTSSNSGHSEGASVNNDGYMLRILNHGAINLAEKWDLMYVAMYQDTDRDNNNGNTWYTVGVRPMYKWTSTMSTLLDIGYDNVKSQRTHDTNDQYKITLAQQWQAGDSIWSRPAIRLFATYAKWNEKWGNANKKDGYIDGMAYRDTATHKFSRGDDDEFTFGAQFEAWW.

The first 24 residues, 1 to 24 (MKSMRILPISLTIMAGLLSIEASA), serve as a signal peptide directing secretion.

This sequence belongs to the porin LamB (TC 1.B.3) family. As to quaternary structure, homotrimer formed of three 18-stranded antiparallel beta-barrels, containing three independent channels.

It is found in the cell outer membrane. The catalysed reaction is beta-maltose(in) = beta-maltose(out). Involved in the transport of maltose and maltodextrins. The chain is Maltoporin from Photorhabdus laumondii subsp. laumondii (strain DSM 15139 / CIP 105565 / TT01) (Photorhabdus luminescens subsp. laumondii).